The chain runs to 412 residues: Decapping nuclease RAI1 (412 aa).

Glu-196 is an a divalent metal cation binding site. Substrate contacts are provided by Cys-228 and Glu-245. A divalent metal cation is bound by residues Asp-247, Glu-265, and Leu-266. Substrate is bound by residues Lys-267 and Gln-291.

This sequence belongs to the DXO/Dom3Z family. In terms of assembly, interacts with exr-1/rat1; the interaction is direct, stabilizes exr-1 protein structure and stimulates its exoribonuclease activity. The interaction also stimulates rai1 pyrophosphohydrolase activity, probably by recruiting it to mRNA substrates. It depends on a divalent metal cation as a cofactor.

Its subcellular location is the nucleus. The enzyme catalyses a 5'-end NAD(+)-phospho-ribonucleoside in mRNA + H2O = a 5'-end phospho-ribonucleoside in mRNA + NAD(+) + H(+). It catalyses the reaction a 5'-end (N(7)-methyl 5'-triphosphoguanosine)-ribonucleoside-ribonucleotide in mRNA + H2O = a (N(7)-methyl 5'-triphosphoguanosine)-nucleoside + a 5'-end phospho-ribonucleoside in mRNA + H(+). It carries out the reaction a 5'-end triphospho-ribonucleoside in mRNA + H2O = a 5'-end phospho-ribonucleoside in mRNA + diphosphate + H(+). Its function is as follows. Decapping enzyme for NAD-capped RNAs: specifically hydrolyzes the nicotinamide adenine dinucleotide (NAD) cap from a subset of RNAs by removing the entire NAD moiety from the 5'-end of an NAD-capped RNA. The NAD-cap is present at the 5'-end of some RNAs and snoRNAs. In contrast to the canonical 5'-end N7 methylguanosine (m7G) cap, the NAD cap promotes mRNA decay. Also acts as a non-canonical decapping enzyme that removes the entire cap structure of m7G capped or incompletely capped RNAs. Has decapping activity toward incomplete 5'-end m7G cap mRNAs such as unmethylated 5'-end-capped RNA (cap0), while it has no activity toward 2'-O-ribose methylated m7G cap (cap1). Also possesses RNA 5'-pyrophosphohydrolase activity by hydrolyzing the 5'-end triphosphate to release pyrophosphates. Stimulates exoribonuclease activity of Rat1, allowing it to degrade RNAs with stable secondary structure more effectively. This chain is Decapping nuclease RAI1 (rai1), found in Neurospora crassa (strain ATCC 24698 / 74-OR23-1A / CBS 708.71 / DSM 1257 / FGSC 987).